Consider the following 557-residue polypeptide: Formate--tetrahydrofolate ligase (557 aa).

An ATP-binding site is contributed by 67–74 (TPAGEGKS).

This sequence belongs to the formate--tetrahydrofolate ligase family.

The enzyme catalyses (6S)-5,6,7,8-tetrahydrofolate + formate + ATP = (6R)-10-formyltetrahydrofolate + ADP + phosphate. The protein operates within one-carbon metabolism; tetrahydrofolate interconversion. The protein is Formate--tetrahydrofolate ligase of Lacticaseibacillus paracasei (strain ATCC 334 / BCRC 17002 / CCUG 31169 / CIP 107868 / KCTC 3260 / NRRL B-441) (Lactobacillus paracasei).